Consider the following 228-residue polypeptide: Cytochrome c oxidase subunit 2 (228 aa).

The Mitochondrial intermembrane portion of the chain corresponds to 1 to 26 (MSTWANLGLQDSASPLMEQLIFFHDH). A helical membrane pass occupies residues 27–48 (ALLILVMITVLVGYLMFMLFFN). Residues 49–62 (NYVNRFLLHGQLIE) lie on the Mitochondrial matrix side of the membrane. A helical transmembrane segment spans residues 63 to 82 (MIWTILPAIILLFIALPSLR). Residues 83–228 (LLYLLDEINE…FIKWISSNNS (146 aa)) lie on the Mitochondrial intermembrane side of the membrane. Residues His-161, Cys-196, Glu-198, Cys-200, His-204, and Met-207 each coordinate Cu cation. Glu-198 serves as a coordination point for Mg(2+).

It belongs to the cytochrome c oxidase subunit 2 family. As to quaternary structure, component of the cytochrome c oxidase (complex IV, CIV), a multisubunit enzyme composed of a catalytic core of 3 subunits and several supernumerary subunits. The complex exists as a monomer or a dimer and forms supercomplexes (SCs) in the inner mitochondrial membrane with ubiquinol-cytochrome c oxidoreductase (cytochrome b-c1 complex, complex III, CIII). It depends on Cu cation as a cofactor.

Its subcellular location is the mitochondrion inner membrane. It catalyses the reaction 4 Fe(II)-[cytochrome c] + O2 + 8 H(+)(in) = 4 Fe(III)-[cytochrome c] + 2 H2O + 4 H(+)(out). Functionally, component of the cytochrome c oxidase, the last enzyme in the mitochondrial electron transport chain which drives oxidative phosphorylation. The respiratory chain contains 3 multisubunit complexes succinate dehydrogenase (complex II, CII), ubiquinol-cytochrome c oxidoreductase (cytochrome b-c1 complex, complex III, CIII) and cytochrome c oxidase (complex IV, CIV), that cooperate to transfer electrons derived from NADH and succinate to molecular oxygen, creating an electrochemical gradient over the inner membrane that drives transmembrane transport and the ATP synthase. Cytochrome c oxidase is the component of the respiratory chain that catalyzes the reduction of oxygen to water. Electrons originating from reduced cytochrome c in the intermembrane space (IMS) are transferred via the dinuclear copper A center (CU(A)) of subunit 2 and heme A of subunit 1 to the active site in subunit 1, a binuclear center (BNC) formed by heme A3 and copper B (CU(B)). The BNC reduces molecular oxygen to 2 water molecules using 4 electrons from cytochrome c in the IMS and 4 protons from the mitochondrial matrix. This Drosophila melanogaster (Fruit fly) protein is Cytochrome c oxidase subunit 2 (mt:CoII).